Here is a 506-residue protein sequence, read N- to C-terminus: Protein MGF 505-9R (506 aa).

The protein belongs to the asfivirus MGF 505 family.

Its function is as follows. Plays a role in virus cell tropism, and may be required for efficient virus replication in macrophages. This chain is Protein MGF 505-9R, found in Ornithodoros (relapsing fever ticks).